A 798-amino-acid polypeptide reads, in one-letter code: uncharacterized protein (798 aa).

The span at 1 to 13 (MSSSQSPSTPSAS) shows a compositional bias: low complexity. Residues 1 to 58 (MSSSQSPSTPSASLVDSSDSKHPDDLPQIYKRRSVWTSSEDAVSSSNSPEQTTPFTVR) constitute a chloroplast transit peptide. Disordered regions lie at residues 1–99 (MSSS…WQDA), 135–158 (AEKK…SMCT), and 417–473 (TGLI…AEPS). A compositionally biased stretch (polar residues) spans 35–55 (VWTSSEDAVSSSNSPEQTTPF). Residues 57–79 (VREDTNADIARELDLPDDPEPHL) are compositionally biased toward basic and acidic residues. Residues 137–146 (KKKRKKKKKA) show a composition bias toward basic residues. The span at 462-473 (AAPAEAQGAEPS) shows a compositional bias: low complexity. The stretch at 578–658 (RSNMEVAGKL…MLSEARGLRD (81 aa)) forms a coiled coil. Residues 749 to 798 (DDLKAPAPEPAPLSPGGHRSVESLADEAGITDQAGSLLPAKDNRPSEDLD) are disordered. S762 bears the Phosphoserine mark. The segment covering 789 to 798 (KDNRPSEDLD) has biased composition (basic and acidic residues).

It localises to the plastid. It is found in the chloroplast. This is an uncharacterized protein from Arabidopsis thaliana (Mouse-ear cress).